The sequence spans 131 residues: Probable lactoylglutathione lyase (131 aa).

A VOC domain is found at 2-126 (FLLHTMIRVG…DGYKIELIQT (125 aa)). Residue His-5 coordinates Ni(2+). Residue Arg-9 participates in substrate binding. Glu-56 provides a ligand contact to Ni(2+). Asn-60 and His-74 together coordinate substrate. Residues His-74 and Glu-122 each coordinate Ni(2+). Glu-122 functions as the Proton donor/acceptor in the catalytic mechanism.

Belongs to the glyoxalase I family. The cofactor is Ni(2+).

It carries out the reaction (R)-S-lactoylglutathione = methylglyoxal + glutathione. It functions in the pathway secondary metabolite metabolism; methylglyoxal degradation; (R)-lactate from methylglyoxal: step 1/2. Its function is as follows. Catalyzes the conversion of hemimercaptal, formed from methylglyoxal and glutathione, to S-lactoylglutathione. The chain is Probable lactoylglutathione lyase (gloA) from Synechocystis sp. (strain ATCC 27184 / PCC 6803 / Kazusa).